Consider the following 374-residue polypeptide: Patatin-2-Kuras 1 (374 aa).

Positions 1–11 (MILATTGSTCA) are cleaved as a signal peptide. A PNPLA domain is found at 20-217 (LSIDGGGIKG…TVGDPALLSL (198 aa)). Residues 24–29 (GGGIKG) carry the GXGXXG motif. The short motif at 63–67 (GTSTG) is the GXSXG element. The active-site Nucleophile is S65. An N-linked (GlcNAc...) asparagine glycan is attached at N103. D203 functions as the Proton acceptor in the catalytic mechanism. A DGA/G motif is present at residues 203 to 205 (DGA). A coiled-coil region spans residues 309–372 (ENALTGTTTE…DRKKLRANKA (64 aa)).

The protein belongs to the patatin family. As to expression, tuber.

Its subcellular location is the vacuole. In terms of biological role, probable lipolytic acyl hydrolase (LAH), an activity which is thought to be involved in the response of tubers to pathogens. The sequence is that of Patatin-2-Kuras 1 (pat2-k1) from Solanum tuberosum (Potato).